A 302-amino-acid chain; its full sequence is Sodium/potassium-transporting ATPase subunit beta-233 (302 aa).

The Cytoplasmic portion of the chain corresponds to 1-30 (MSGNKDSDGGWKTFIWNSEKKELLGRTGCS). The chain crosses the membrane as a helical; Signal-anchor for type II membrane protein span at residues 31-51 (WFKILLFYVIFYGCLAAVFVG). The Extracellular portion of the chain corresponds to 52–302 (TIQALLLTLS…FDIKITVNDS (251 aa)). Disulfide bonds link C125-C148 and C158-C174. Residues N193 and N263 are each glycosylated (N-linked (GlcNAc...) asparagine). The cysteines at positions 213 and 274 are disulfide-linked.

This sequence belongs to the X(+)/potassium ATPases subunit beta family. In terms of assembly, the sodium/potassium-transporting ATPase is composed of a catalytic alpha subunit, an auxiliary non-catalytic beta subunit and an additional regulatory subunit. In terms of processing, glycosylated. In terms of tissue distribution, expressed mainly in epithelial tissues.

It is found in the cell membrane. This is the non-catalytic component of the active enzyme, which catalyzes the hydrolysis of ATP coupled with the exchange of Na(+) and K(+) ions across the plasma membrane. The beta subunit regulates, through assembly of alpha/beta heterodimers, the number of sodium pumps transported to the plasma membrane. This Anguilla anguilla (European freshwater eel) protein is Sodium/potassium-transporting ATPase subunit beta-233.